Consider the following 90-residue polypeptide: uncharacterized protein (90 aa).

This is an uncharacterized protein from Bacillus subtilis (strain 168).